Reading from the N-terminus, the 440-residue chain is Acetylornithine deacetylase (440 aa).

Position 101 (histidine 101) interacts with Zn(2+). Residue aspartate 103 is part of the active site. Aspartate 133 serves as a coordination point for Zn(2+). The Proton acceptor role is filled by glutamate 167. Zn(2+)-binding residues include glutamate 168 and histidine 412.

It belongs to the peptidase M20A family. ArgE subfamily. As to quaternary structure, homodimer. Zn(2+) serves as cofactor. Co(2+) is required as a cofactor.

The enzyme catalyses N(2)-acetyl-L-ornithine + H2O = L-ornithine + acetate. It participates in amino-acid biosynthesis; L-arginine biosynthesis; L-ornithine from N(2)-acetyl-L-ornithine (linear): step 1/1. The chain is Acetylornithine deacetylase from Arabidopsis thaliana (Mouse-ear cress).